The following is a 235-amino-acid chain: Phosphoribosylaminoimidazole-succinocarboxamide synthase (235 aa).

Belongs to the SAICAR synthetase family.

It catalyses the reaction 5-amino-1-(5-phospho-D-ribosyl)imidazole-4-carboxylate + L-aspartate + ATP = (2S)-2-[5-amino-1-(5-phospho-beta-D-ribosyl)imidazole-4-carboxamido]succinate + ADP + phosphate + 2 H(+). Its pathway is purine metabolism; IMP biosynthesis via de novo pathway; 5-amino-1-(5-phospho-D-ribosyl)imidazole-4-carboxamide from 5-amino-1-(5-phospho-D-ribosyl)imidazole-4-carboxylate: step 1/2. The polypeptide is Phosphoribosylaminoimidazole-succinocarboxamide synthase (Clostridium botulinum (strain Alaska E43 / Type E3)).